The sequence spans 474 residues: 4-aminobutyrate aminotransferase (474 aa).

Residues 1–13 (MSSTATVTESTHF) show a composition bias toward polar residues. Residues 1–31 (MSSTATVTESTHFFPNEPQGPSIKTETIPGP) form a disordered region. 142 to 143 (GS) provides a ligand contact to pyridoxal 5'-phosphate. R199 serves as a coordination point for substrate. K333 carries the N6-(pyridoxal phosphate)lysine modification. T357 lines the pyridoxal 5'-phosphate pocket.

It belongs to the class-III pyridoxal-phosphate-dependent aminotransferase family. Homodimer. Pyridoxal 5'-phosphate is required as a cofactor.

Its subcellular location is the cytoplasm. It carries out the reaction 4-aminobutanoate + 2-oxoglutarate = succinate semialdehyde + L-glutamate. Functionally, required for the degradation of gamma-aminobutyric acid (GABA), which is important for utilization of GABA as nitrogen source. Deaminates GABA to succinate-semialdehyde, which in turn is converted to succinate by the succinate semialdehyde dehydrogenase. Cannot transaminate beta-alanine (BAL). This chain is 4-aminobutyrate aminotransferase (uga1), found in Schizosaccharomyces pombe (strain 972 / ATCC 24843) (Fission yeast).